The following is a 392-amino-acid chain: MSTRESFNPETYELDKSFRLTRFTELKGTGCKVPQDVLQKLLESLQENHFQEDEQFLGAVMPRLGIGMDTCVIPLRHGGLSLVQTTDYIYPIVDDPYMMGRIACANVLSDLYAMGVTECDNMLMLLGVSNKMTDRERDKVIPLIIQGFKDAAEEAGTSVTGGQTVLNPWIVLGGVATTVCQPNEFIMPDNAVPGDVLVLTKPLGTQVAVAVHQWLDIPEKWNKIKLVVTQEDVELAYQEAMMNMARLNRTAAGLMHTFNAHAATDITGFGILGHAQNLAKQQRNEVSFVIHNLPVLAKMAAVSKACGNMFGLMHGTCPETSGGLLICLPREQAARFCAEIKSPKYGEGHQAWIIGIVEKGNRTARIIDKPRIIEVAPQVATQNVNPTPGATS.

Ser-2 is subject to N-acetylserine. Residue Cys-31 is part of the active site. Residues Lys-32, 67–69 (GMD), Asp-87, Asp-110, and 161–164 (GGQT) contribute to the ATP site. Residue Asp-69 coordinates Mg(2+). Asp-110 contacts Mg(2+). Mg(2+) is bound at residue Asp-265.

This sequence belongs to the selenophosphate synthase 1 family. Class II subfamily. Homodimer. The cofactor is Mg(2+).

It is found in the cell membrane. It localises to the nucleus membrane. The catalysed reaction is hydrogenselenide + ATP + H2O = selenophosphate + AMP + phosphate + 2 H(+). Functionally, synthesizes selenophosphate from selenide and ATP. The polypeptide is Selenide, water dikinase 1 (Sephs1) (Mus musculus (Mouse)).